We begin with the raw amino-acid sequence, 161 residues long: Small ribosomal subunit protein uS19 (161 aa).

The span at 1 to 19 (MARQKKYSGKGGARKKNKQ) shows a compositional bias: basic residues. The interval 1–26 (MARQKKYSGKGGARKKNKQKQNVAPR) is disordered.

The protein belongs to the universal ribosomal protein uS19 family.

In terms of biological role, protein S19 forms a complex with S13 that binds strongly to the 16S ribosomal RNA. In Methanococcus maripaludis (strain C5 / ATCC BAA-1333), this protein is Small ribosomal subunit protein uS19.